We begin with the raw amino-acid sequence, 650 residues long: GATA zinc finger domain-containing protein 11 (650 aa).

Residues 16-79 (LYNNTNTNSN…NSSNSLSSSF (64 aa)) show a composition bias toward low complexity. 4 disordered regions span residues 16–96 (LYNN…SGYN), 111–181 (KRSN…TTPL), 221–335 (NNSN…NNNK), and 409–515 (RIFG…NKRK). Residues 116–129 (LDDNMSVPTLQNFT) show a composition bias toward polar residues. Low complexity-rich tracts occupy residues 130–180 (NNNN…PTTP) and 221–260 (NNSN…NNNN). Residues 261–272 (QSIVPQSIHLQS) are compositionally biased toward polar residues. Residues 273-334 (TTPQIQPLSL…NNSYNTNNNN (62 aa)) are compositionally biased toward low complexity. Positions 425 to 434 (RPRRFRKSKV) are enriched in basic residues. Positions 442–511 (HNNNNNNINN…GNGNTNSTNN (70 aa)) are enriched in low complexity. The GATA-type zinc finger occupies 522-547 (CTSCGTTSSPEWRKGPAGNQSLCNAC). Residues 619–650 (QQQQQQQQQQQNHHHQQLQQQQQQQQQQQLHH) are disordered.

In terms of biological role, transcription factor that regulates morphogenetic cell movement during development. This Dictyostelium discoideum (Social amoeba) protein is GATA zinc finger domain-containing protein 11 (gtaK).